Reading from the N-terminus, the 118-residue chain is Holo-[acyl-carrier-protein] synthase (118 aa).

Residues Asp-5 and Glu-51 each coordinate Mg(2+).

Belongs to the P-Pant transferase superfamily. AcpS family. Mg(2+) is required as a cofactor.

Its subcellular location is the cytoplasm. The enzyme catalyses apo-[ACP] + CoA = holo-[ACP] + adenosine 3',5'-bisphosphate + H(+). Transfers the 4'-phosphopantetheine moiety from coenzyme A to a Ser of acyl-carrier-protein. In Helicobacter pylori (strain P12), this protein is Holo-[acyl-carrier-protein] synthase.